The sequence spans 318 residues: Probable arabinan endo-1,5-alpha-L-arabinosidase C (318 aa).

A signal peptide spans 1–28 (MLSFVLLLCVALVNAYSDPGACSGTCWA). The Proton acceptor role is filled by D30. 3 N-linked (GlcNAc...) asparagine glycosylation sites follow: N72, N80, and N188. The active-site Proton donor is the E196. N-linked (GlcNAc...) asparagine glycosylation occurs at N277.

Belongs to the glycosyl hydrolase 43 family.

The protein localises to the secreted. It catalyses the reaction Endohydrolysis of (1-&gt;5)-alpha-arabinofuranosidic linkages in (1-&gt;5)-arabinans.. It functions in the pathway glycan metabolism; L-arabinan degradation. In terms of biological role, endo-1,5-alpha-L-arabinanase involved in degradation of pectin. Its preferred substrate is linear 1,5-alpha-L-arabinan. This Aspergillus niger (strain ATCC MYA-4892 / CBS 513.88 / FGSC A1513) protein is Probable arabinan endo-1,5-alpha-L-arabinosidase C (abnC).